The following is a 212-amino-acid chain: ATP-dependent dethiobiotin synthetase BioD (212 aa).

12–17 (DCGKTF) lines the ATP pocket. Thr16 is a Mg(2+) binding site. Lys33 is a catalytic residue. Ser37 contacts substrate. ATP-binding positions include Asp50, 110-113 (EGAG), and 170-171 (NC). Residues Asp50 and Glu110 each coordinate Mg(2+).

It belongs to the dethiobiotin synthetase family. In terms of assembly, homodimer. Mg(2+) serves as cofactor.

It localises to the cytoplasm. It carries out the reaction (7R,8S)-7,8-diammoniononanoate + CO2 + ATP = (4R,5S)-dethiobiotin + ADP + phosphate + 3 H(+). It functions in the pathway cofactor biosynthesis; biotin biosynthesis; biotin from 7,8-diaminononanoate: step 1/2. Its function is as follows. Catalyzes a mechanistically unusual reaction, the ATP-dependent insertion of CO2 between the N7 and N8 nitrogen atoms of 7,8-diaminopelargonic acid (DAPA, also called 7,8-diammoniononanoate) to form a ureido ring. The chain is ATP-dependent dethiobiotin synthetase BioD from Legionella pneumophila (strain Corby).